The sequence spans 130 residues: Small ribosomal subunit protein uS9 (130 aa).

The protein belongs to the universal ribosomal protein uS9 family.

This is Small ribosomal subunit protein uS9 from Exiguobacterium sibiricum (strain DSM 17290 / CCUG 55495 / CIP 109462 / JCM 13490 / 255-15).